Reading from the N-terminus, the 403-residue chain is uncharacterized protein (403 aa).

The next 12 helical transmembrane spans lie at Ile-25–Leu-47, Ser-62–Ser-81, Val-88–Trp-110, Ile-114–Ser-136, Val-143–Leu-165, Trp-175–Leu-197, Leu-229–Leu-251, Phe-256–Pro-278, Gly-290–Thr-307, Ile-311–His-330, Ser-350–Ile-372, and Trp-376–Leu-398.

The protein belongs to the major facilitator superfamily.

Its subcellular location is the cell membrane. This is an uncharacterized protein from Buchnera aphidicola subsp. Baizongia pistaciae (strain Bp).